The chain runs to 82 residues: Small ribosomal subunit protein bS16 (82 aa).

This sequence belongs to the bacterial ribosomal protein bS16 family.

The protein is Small ribosomal subunit protein bS16 of Pectobacterium atrosepticum (strain SCRI 1043 / ATCC BAA-672) (Erwinia carotovora subsp. atroseptica).